An 83-amino-acid polypeptide reads, in one-letter code: Small ribosomal subunit protein bS16 (83 aa).

Belongs to the bacterial ribosomal protein bS16 family.

The sequence is that of Small ribosomal subunit protein bS16 from Ectopseudomonas mendocina (strain ymp) (Pseudomonas mendocina).